A 692-amino-acid chain; its full sequence is Eomesodermin (692 aa).

The tract at residues Asn-35–Pro-135 is disordered. A DNA-binding region (T-box) is located at residues Leu-263–Asp-443. Residues Ser-578–Ser-692 form a required for transcription activation region. Disordered regions lie at residues Thr-595 to Pro-614 and Glu-621 to Thr-673. 2 stretches are compositionally biased toward low complexity: residues Ser-596–Ser-609 and Ser-654–Pro-665.

It is found in the nucleus. Functions as a transcriptional activator playing a crucial role during development. Functions in gastrulation, regulating mesoderm differentiation. Activates wnt8, t/bra, chrd and mix-A/mix.1 expression. The polypeptide is Eomesodermin (eomes) (Xenopus laevis (African clawed frog)).